Consider the following 291-residue polypeptide: Fructose-1,6-bisphosphatase class 1 1 (291 aa).

Residues glutamate 78, aspartate 95, leucine 97, and aspartate 98 each coordinate Mg(2+). Substrate is bound by residues 98–101 (DGSS), tyrosine 203, and lysine 233. A Mg(2+)-binding site is contributed by glutamate 239.

This sequence belongs to the FBPase class 1 family. As to quaternary structure, homotetramer. Requires Mg(2+) as cofactor.

The protein resides in the cytoplasm. The enzyme catalyses beta-D-fructose 1,6-bisphosphate + H2O = beta-D-fructose 6-phosphate + phosphate. Its pathway is carbohydrate biosynthesis; gluconeogenesis. The polypeptide is Fructose-1,6-bisphosphatase class 1 1 (Haloarcula marismortui (strain ATCC 43049 / DSM 3752 / JCM 8966 / VKM B-1809) (Halobacterium marismortui)).